A 706-amino-acid chain; its full sequence is Transcription factor 12 (706 aa).

Positions 25–109 are disordered; the sequence is AMFSPPVNSG…TPFMNSNLIG (85 aa). Composition is skewed to polar residues over residues 30-48 and 56-76; these read PVNS…QFSG and GTTS…SRGF. Phosphoserine occurs at positions 47, 67, and 79. Positions 81-93 are enriched in basic and acidic residues; sequence HYSDHLNDSRLGT. The residue at position 98 (Ser98) is a Phosphoserine. A Glycyl lysine isopeptide (Lys-Gly) (interchain with G-Cter in SUMO2) cross-link involves residue Lys110. A phosphoserine mark is found at Ser116 and Ser124. The tract at residues 119–140 is leucine-zipper; the sequence is LYSRDSGLSGCQSSLLRQDLGL. Disordered regions lie at residues 140 to 222 and 249 to 313; these read LGSP…SMFA and FGGI…ASHT. The segment covering 144–163 has biased composition (polar residues); it reads AQLSSSGKPGTPYYSFSATS. A Glycyl lysine isopeptide (Lys-Gly) (interchain with G-Cter in SUMO2) cross-link involves residue Lys181. Positions 181-188 match the Nuclear localization signal motif; sequence KKVRKVPP. Positions 256–269 are enriched in low complexity; the sequence is STSHMSQSSSYGSL. The segment covering 282 to 306 has biased composition (polar residues); sequence VSPTDINTSLPPMSSFHRGSTSSSP. Thr313 is modified (phosphothreonine). Ser333 is modified (phosphoserine). Disordered stretches follow at residues 349-392 and 520-604; these read PDHT…YENS and HKTP…ERRM. A compositionally biased stretch (low complexity) spans 352–363; sequence TSSSFPSNPSTP. Composition is skewed to polar residues over residues 364-376 and 383-392; these read VGSP…TSQW and APSSPSYENS. Ser392 carries the phosphoserine modification. Composition is skewed to basic and acidic residues over residues 542-554 and 560-575; these read IKTE…ENLH and DDMK…DIKV. Lys543 participates in a covalent cross-link: Glycyl lysine isopeptide (Lys-Gly) (interchain with G-Cter in SUMO2). The residue at position 564 (Ser564) is a Phosphoserine. A Glycyl lysine isopeptide (Lys-Gly) (interchain with G-Cter in SUMO2) cross-link involves residue Lys574. Thr581 bears the Phosphothreonine mark. Phosphoserine occurs at positions 582 and 583. The segment covering 592–604 has biased composition (basic and acidic residues); sequence PEQKIEREKERRM. One can recognise a bHLH domain in the interval 601-654; sequence ERRMANNARERLRVRDINEAFKELGRMCQLHLKSEKPQTKLLILHQAVAVILSL. Glycyl lysine isopeptide (Lys-Gly) (interchain with G-Cter in SUMO2) cross-links involve residues Lys633 and Lys677. Residues 656 to 679 form a class A specific domain region; the sequence is QQVRERNLNPKAACLKRREEEKVS. The tract at residues 674–706 is disordered; it reads EEEKVSAASAEPPNTLPGAHPGLSESTNPMGHL. A compositionally biased stretch (polar residues) spans 697–706; it reads SESTNPMGHL.

As to quaternary structure, efficient DNA binding requires dimerization with another bHLH protein. Forms homo- or heterooligomers with myogenin, E12 and ITF2 proteins and RUNX1T1. Interacts with PTF1A. Interacts with NEUROD2. Interacts with BHLHA9. In terms of tissue distribution, widely expressed.

The protein localises to the nucleus. Functionally, transcriptional regulator. Involved in the initiation of neuronal differentiation. Activates transcription by binding to the E box (5'-CANNTG-3'). May be involved in the functional network that regulates the development of the GnRH axis. The protein is Transcription factor 12 (Tcf12) of Mus musculus (Mouse).